A 352-amino-acid polypeptide reads, in one-letter code: Light dependent period A (352 aa).

2 4Fe-4S ferredoxin-type domains span residues 88–119 (RRAW…STGV) and 121–144 (RDRC…AQAW). Cysteine 97, cysteine 101, cysteine 105, cysteine 109, cysteine 124, cysteine 127, cysteine 130, and cysteine 134 together coordinate [4Fe-4S] cluster.

In terms of assembly, interacts with KaiA, CikA and SasA; the complexes do not follow circadian rhythms. [4Fe-4S] cluster serves as cofactor.

In terms of biological role, functions in an input pathway to the Kai circadian clock. Probably senses the metabolic state of the cell via plastoquinone levels and informs the clock to modulate the photoperiod length. Deletion decreases the ability of the bacteria to modulate the circadian period in response to altered light regimes. Mild overexpression increases the photoperiod. Rapidly degraded in the presence of the quinone analog DBMIB (2,5-dibromo-3-methyl-6-isopropyl-p-benzoquinone), an artifical electron acceptor for photosystem II that reduces the plastoquinone pool. Partially resonsible for sensitivity of CikA to DBMIB, influences the levels of KaiA. The protein is Light dependent period A of Synechococcus elongatus (strain ATCC 33912 / PCC 7942 / FACHB-805) (Anacystis nidulans R2).